Here is a 179-residue protein sequence, read N- to C-terminus: Large ribosomal subunit protein uL6 (179 aa).

This sequence belongs to the universal ribosomal protein uL6 family. As to quaternary structure, part of the 50S ribosomal subunit.

Functionally, this protein binds to the 23S rRNA, and is important in its secondary structure. It is located near the subunit interface in the base of the L7/L12 stalk, and near the tRNA binding site of the peptidyltransferase center. This is Large ribosomal subunit protein uL6 from Bifidobacterium longum subsp. infantis (strain ATCC 15697 / DSM 20088 / JCM 1222 / NCTC 11817 / S12).